The following is a 179-amino-acid chain: Cytochrome b6-f complex iron-sulfur subunit (179 aa).

Residues 21–43 traverse the membrane as a helical segment; that stretch reads LLTFGTVTGVALGALYPVVKYFI. Residues 61-162 form the Rieske domain; sequence GNDVSLSKFL…ANTVDDKIIL (102 aa). Residues Cys108, His110, Cys126, and His129 each contribute to the [2Fe-2S] cluster site. Residues Cys113 and Cys128 are joined by a disulfide bond.

Belongs to the Rieske iron-sulfur protein family. The 4 large subunits of the cytochrome b6-f complex are cytochrome b6, subunit IV (17 kDa polypeptide, PetD), cytochrome f and the Rieske protein, while the 4 small subunits are PetG, PetL, PetM and PetN. The complex functions as a dimer. Requires [2Fe-2S] cluster as cofactor.

It localises to the cellular thylakoid membrane. It catalyses the reaction 2 oxidized [plastocyanin] + a plastoquinol + 2 H(+)(in) = 2 reduced [plastocyanin] + a plastoquinone + 4 H(+)(out). Component of the cytochrome b6-f complex, which mediates electron transfer between photosystem II (PSII) and photosystem I (PSI), cyclic electron flow around PSI, and state transitions. The chain is Cytochrome b6-f complex iron-sulfur subunit from Desmonostoc sp. (strain PCC 7906) (Nostoc sp. (strain PCC 7906)).